The primary structure comprises 217 residues: Cytokinin riboside 5'-monophosphate phosphoribohydrolase LOG7 (217 aa).

Substrate contacts are provided by residues E79, 97-98 (RK), 114-120 (GYGTLEE), and T126.

It belongs to the LOG family. Expressed in roots and shoots. Detected in the epidermis of the root elongation zone, cotyledon and leaves, in trichomes and pollen.

Its subcellular location is the cytoplasm. It localises to the nucleus. It carries out the reaction N(6)-(dimethylallyl)adenosine 5'-phosphate + H2O = N(6)-dimethylallyladenine + D-ribose 5-phosphate. It catalyses the reaction 9-ribosyl-trans-zeatin 5'-phosphate + H2O = trans-zeatin + D-ribose 5-phosphate. Functionally, cytokinin-activating enzyme working in the direct activation pathway. Phosphoribohydrolase that converts inactive cytokinin nucleotides to the biologically active free-base forms. In Arabidopsis thaliana (Mouse-ear cress), this protein is Cytokinin riboside 5'-monophosphate phosphoribohydrolase LOG7 (LOG7).